A 115-amino-acid polypeptide reads, in one-letter code: NADH-ubiquinone oxidoreductase chain 3 (115 aa).

Transmembrane regions (helical) follow at residues 3-23, 55-75, and 86-106; these read LVMALLTNTALASLLVLIAFW, FFLVAITFLLFDLEVALLLPL, and TMLIMALTLISLLAISLAYEW.

Belongs to the complex I subunit 3 family. Core subunit of respiratory chain NADH dehydrogenase (Complex I) which is composed of 45 different subunits. Interacts with TMEM186. Interacts with TMEM242.

It localises to the mitochondrion inner membrane. The catalysed reaction is a ubiquinone + NADH + 5 H(+)(in) = a ubiquinol + NAD(+) + 4 H(+)(out). Functionally, core subunit of the mitochondrial membrane respiratory chain NADH dehydrogenase (Complex I) which catalyzes electron transfer from NADH through the respiratory chain, using ubiquinone as an electron acceptor. Essential for the catalytic activity of complex I. This chain is NADH-ubiquinone oxidoreductase chain 3, found in Hippopotamus amphibius (Hippopotamus).